A 394-amino-acid polypeptide reads, in one-letter code: Ribulose bisphosphate carboxylase large chain (394 aa).

At Lys-5 the chain carries N6,N6,N6-trimethyllysine. The substrate site is built by Asn-114 and Thr-164. Lys-166 functions as the Proton acceptor in the catalytic mechanism. Position 168 (Lys-168) interacts with substrate. The Mg(2+) site is built by Lys-192, Asp-194, and Glu-195. Position 192 is an N6-carboxylysine (Lys-192). His-285 (proton acceptor) is an active-site residue. Substrate-binding residues include Arg-286, His-318, and Ser-370.

This sequence belongs to the RuBisCO large chain family. Type I subfamily. In terms of assembly, heterohexadecamer of 8 large chains and 8 small chains. Mg(2+) serves as cofactor.

The protein localises to the plastid. Its subcellular location is the chloroplast. The enzyme catalyses 2 (2R)-3-phosphoglycerate + 2 H(+) = D-ribulose 1,5-bisphosphate + CO2 + H2O. It catalyses the reaction D-ribulose 1,5-bisphosphate + O2 = 2-phosphoglycolate + (2R)-3-phosphoglycerate + 2 H(+). RuBisCO catalyzes two reactions: the carboxylation of D-ribulose 1,5-bisphosphate, the primary event in carbon dioxide fixation, as well as the oxidative fragmentation of the pentose substrate in the photorespiration process. Both reactions occur simultaneously and in competition at the same active site. This chain is Ribulose bisphosphate carboxylase large chain (rbcL), found in Euryale ferox (Gorgon plant).